Here is a 162-residue protein sequence, read N- to C-terminus: UPF0305 protein MmarC6_0221 (162 aa).

It belongs to the UPF0305 family.

The polypeptide is UPF0305 protein MmarC6_0221 (Methanococcus maripaludis (strain C6 / ATCC BAA-1332)).